A 451-amino-acid polypeptide reads, in one-letter code: Signal transduction histidine-protein kinase ArlS (451 aa).

2 helical membrane-spanning segments follow: residues 11 to 31 (IIVT…IIIF) and 156 to 176 (IIAL…SYVF). The region spanning 178–231 (TQITKPLVSLSNKMIEIRRDGFQNKLQLNTNYEEIDNLANTFNEMMSQIEESFN) is the HAMP domain. The 213-residue stretch at 239–451 (DASHELRTPL…NKGTTFKIIF (213 aa)) folds into the Histidine kinase domain. Residue His242 is modified to Phosphohistidine; by autocatalysis.

Post-translationally, autophosphorylated.

It localises to the cell membrane. The enzyme catalyses ATP + protein L-histidine = ADP + protein N-phospho-L-histidine.. Member of the two-component regulatory system ArlS/ArlR involved in the regulation of adhesion, autolysis, multidrug resistance and virulence. ArlS probably functions as a sensor protein kinase which is autophosphorylated at a histidine residue and transfers its phosphate group to ArlR. The sequence is that of Signal transduction histidine-protein kinase ArlS (arlS) from Staphylococcus aureus (strain USA300).